The primary structure comprises 300 residues: ETS homologous factor (300 aa).

The PNT domain maps to 29-115 (PTCNVSSGFF…SNLQHLKWNG (87 aa)). Residues 181–203 (VAESPDMKKEQDHPVKSHTKKHN) are disordered. Residues 185–195 (PDMKKEQDHPV) are compositionally biased toward basic and acidic residues. A DNA-binding region (ETS) is located at residues 207–289 (THLWEFIRDI…DGRRLVYKFG (83 aa)).

The protein belongs to the ETS family. As to expression, highly expressed in kidney and lung, weakly in skeletal muscle, heart, and liver, and not detected in brain, spleen or testis.

The protein localises to the nucleus. Functionally, transcriptional activator that may play a role in regulating epithelial cell differentiation and proliferation. May act as a repressor for a specific subset of ETS/AP-1-responsive genes, and as a modulator of the nuclear response to mitogen-activated protein kinase signaling cascades. Binds to DNA sequences containing the consensus nucleotide core sequence GGAA. Involved in regulation of TNFRSF10B/DR5 expression through Ets-binding sequences on the TNFRSF10B/DR5 promoter. The protein is ETS homologous factor of Mus musculus (Mouse).